The primary structure comprises 281 residues: Nucleotide-binding protein MADE_1004170 (281 aa).

G8–S15 is a binding site for ATP. D56–N59 is a binding site for GTP.

Belongs to the RapZ-like family.

Functionally, displays ATPase and GTPase activities. The polypeptide is Nucleotide-binding protein MADE_1004170 (Alteromonas mediterranea (strain DSM 17117 / CIP 110805 / LMG 28347 / Deep ecotype)).